A 343-amino-acid chain; its full sequence is Glycerol-3-phosphate dehydrogenase [NAD(P)+] (343 aa).

4 residues coordinate NADPH: S15, F16, R36, and K110. Positions 110 and 138 each coordinate sn-glycerol 3-phosphate. A142 contacts NADPH. Sn-glycerol 3-phosphate-binding residues include K193, D246, S256, R257, and N258. K193 serves as the catalytic Proton acceptor. R257 serves as a coordination point for NADPH. E283 provides a ligand contact to NADPH.

The protein belongs to the NAD-dependent glycerol-3-phosphate dehydrogenase family.

It is found in the cytoplasm. It carries out the reaction sn-glycerol 3-phosphate + NAD(+) = dihydroxyacetone phosphate + NADH + H(+). The catalysed reaction is sn-glycerol 3-phosphate + NADP(+) = dihydroxyacetone phosphate + NADPH + H(+). It participates in membrane lipid metabolism; glycerophospholipid metabolism. Its function is as follows. Catalyzes the reduction of the glycolytic intermediate dihydroxyacetone phosphate (DHAP) to sn-glycerol 3-phosphate (G3P), the key precursor for phospholipid synthesis. The sequence is that of Glycerol-3-phosphate dehydrogenase [NAD(P)+] from Alcanivorax borkumensis (strain ATCC 700651 / DSM 11573 / NCIMB 13689 / SK2).